Reading from the N-terminus, the 314-residue chain is Ribosomal RNA small subunit methyltransferase H (314 aa).

S-adenosyl-L-methionine contacts are provided by residues 58–60 (GGH), Asp76, Phe103, Asp119, and Gln126.

Belongs to the methyltransferase superfamily. RsmH family.

The protein localises to the cytoplasm. The enzyme catalyses cytidine(1402) in 16S rRNA + S-adenosyl-L-methionine = N(4)-methylcytidine(1402) in 16S rRNA + S-adenosyl-L-homocysteine + H(+). Functionally, specifically methylates the N4 position of cytidine in position 1402 (C1402) of 16S rRNA. This is Ribosomal RNA small subunit methyltransferase H from Gloeobacter violaceus (strain ATCC 29082 / PCC 7421).